The sequence spans 323 residues: Lipoyl synthase (323 aa).

7 residues coordinate [4Fe-4S] cluster: Cys53, Cys58, Cys64, Cys79, Cys83, Cys86, and Ser293. The Radical SAM core domain occupies 65–282 (WTKKQATVMI…AATARAKGFS (218 aa)).

This sequence belongs to the radical SAM superfamily. Lipoyl synthase family. [4Fe-4S] cluster serves as cofactor.

It localises to the cytoplasm. The enzyme catalyses [[Fe-S] cluster scaffold protein carrying a second [4Fe-4S](2+) cluster] + N(6)-octanoyl-L-lysyl-[protein] + 2 oxidized [2Fe-2S]-[ferredoxin] + 2 S-adenosyl-L-methionine + 4 H(+) = [[Fe-S] cluster scaffold protein] + N(6)-[(R)-dihydrolipoyl]-L-lysyl-[protein] + 4 Fe(3+) + 2 hydrogen sulfide + 2 5'-deoxyadenosine + 2 L-methionine + 2 reduced [2Fe-2S]-[ferredoxin]. It functions in the pathway protein modification; protein lipoylation via endogenous pathway; protein N(6)-(lipoyl)lysine from octanoyl-[acyl-carrier-protein]: step 2/2. Catalyzes the radical-mediated insertion of two sulfur atoms into the C-6 and C-8 positions of the octanoyl moiety bound to the lipoyl domains of lipoate-dependent enzymes, thereby converting the octanoylated domains into lipoylated derivatives. This chain is Lipoyl synthase, found in Zymomonas mobilis subsp. mobilis (strain ATCC 31821 / ZM4 / CP4).